The sequence spans 231 residues: Staphylococcal superantigen-like 7 (231 aa).

The first 30 residues, 1–30 (MKLKTLAKATLALGLLTTGVITSEGQAVQA), serve as a signal peptide directing secretion.

The protein belongs to the staphylococcal/streptococcal toxin family. As to quaternary structure, interacts with host IgA and complement C5; these interactions inhibits complement activation.

The protein localises to the secreted. Its function is as follows. Plays a role in the inhibition of host complement-mediated lysis and serum bactericidal activity by interacting with complement component C5. Affects all three pathways of complement activation and inhibits the cleavage of C5 by preventing its binding to C5 convertases. In turn, prevents C5a-mediated neutrophil migration. This Staphylococcus aureus (strain NCTC 8325 / PS 47) protein is Staphylococcal superantigen-like 7.